Here is a 572-residue protein sequence, read N- to C-terminus: Sulfite reductase [NADPH] hemoprotein beta-component (572 aa).

Residues Cys-437, Cys-443, Cys-482, and Cys-486 each coordinate [4Fe-4S] cluster. Position 486 (Cys-486) interacts with siroheme.

It belongs to the nitrite and sulfite reductase 4Fe-4S domain family. Alpha(8)-beta(8). The alpha component is a flavoprotein, the beta component is a hemoprotein. The cofactor is siroheme. Requires [4Fe-4S] cluster as cofactor.

The catalysed reaction is hydrogen sulfide + 3 NADP(+) + 3 H2O = sulfite + 3 NADPH + 4 H(+). It functions in the pathway sulfur metabolism; hydrogen sulfide biosynthesis; hydrogen sulfide from sulfite (NADPH route): step 1/1. In terms of biological role, component of the sulfite reductase complex that catalyzes the 6-electron reduction of sulfite to sulfide. This is one of several activities required for the biosynthesis of L-cysteine from sulfate. The polypeptide is Sulfite reductase [NADPH] hemoprotein beta-component (Staphylococcus epidermidis (strain ATCC 35984 / DSM 28319 / BCRC 17069 / CCUG 31568 / BM 3577 / RP62A)).